The primary structure comprises 420 residues: Cyclin-B2-1 (420 aa).

The segment at 1-61 is disordered; that stretch reads MDRASENRRL…EKSGKEEQKP (61 aa). Basic and acidic residues predominate over residues 49-60; that stretch reads PMLEKSGKEEQK.

The protein belongs to the cyclin family. Cyclin AB subfamily. Interacts with CDKB2-1. Expressed in the root apices.

Involved in the control of the cell cycle at the G2/M (mitosis) transition. May activate CDKB2-1 kinase. The protein is Cyclin-B2-1 (CYCB2-1) of Oryza sativa subsp. japonica (Rice).